The following is a 1180-amino-acid chain: Phosphatidylinositol 4-kinase (1180 aa).

A PIK helical domain is found at 1–206 (MNKISDTIII…SVYLHSPSTS (206 aa)). 5 disordered regions span residues 15–84 (NEDE…KHKE), 257–327 (ENDH…ENDN), 355–391 (TSPI…NNIN), 768–799 (TISN…IPHS), and 832–894 (AISP…SPFG). The span at 38 to 74 (NNNNNNILTNVNNNKNNTITSSGGSDSSSSSSNNNNN) shows a compositional bias: low complexity. The span at 75-84 (KIKKSKKHKE) shows a compositional bias: basic residues. Residues 257–270 (ENDHHIENDPKKDI) are compositionally biased toward basic and acidic residues. Composition is skewed to low complexity over residues 271 to 325 (NSNN…SGEN), 364 to 391 (NNNN…NNIN), 768 to 793 (TISN…PTLP), and 835 to 879 (PPSQ…SPTN). The 270-residue stretch at 895–1164 (ESWQEKIERY…LISYSIDHFK (270 aa)) folds into the PI3K/PI4K catalytic domain. Positions 901 to 907 (IERYKKI) are G-loop. Residues 1030–1038 (QIKDRHNGN) form a catalytic loop region. Positions 1049–1073 (HIDFGFILSNSPGNISFESAPFKLT) are activation loop.

This sequence belongs to the PI3/PI4-kinase family. Type III PI4K subfamily.

The catalysed reaction is a 1,2-diacyl-sn-glycero-3-phospho-(1D-myo-inositol) + ATP = a 1,2-diacyl-sn-glycero-3-phospho-(1D-myo-inositol 4-phosphate) + ADP + H(+). Its function is as follows. Acts on phosphatidylinositol (PtdIns) in the first committed step in the production of the second messenger inositol-1,4,5,-trisphosphate. In Dictyostelium discoideum (Social amoeba), this protein is Phosphatidylinositol 4-kinase (pikD).